The primary structure comprises 449 residues: Glutamyl-tRNA reductase (449 aa).

Substrate-binding positions include 58–61 (TCNR), serine 121, 126–128 (ETQ), and glutamine 132. Cysteine 59 (nucleophile) is an active-site residue. 203 to 208 (GLGEMA) is an NADP(+) binding site.

Belongs to the glutamyl-tRNA reductase family. Homodimer.

It carries out the reaction (S)-4-amino-5-oxopentanoate + tRNA(Glu) + NADP(+) = L-glutamyl-tRNA(Glu) + NADPH + H(+). It functions in the pathway porphyrin-containing compound metabolism; protoporphyrin-IX biosynthesis; 5-aminolevulinate from L-glutamyl-tRNA(Glu): step 1/2. Catalyzes the NADPH-dependent reduction of glutamyl-tRNA(Glu) to glutamate 1-semialdehyde (GSA). This Helicobacter pylori (strain ATCC 700392 / 26695) (Campylobacter pylori) protein is Glutamyl-tRNA reductase.